Reading from the N-terminus, the 100-residue chain is uncharacterized protein (100 aa).

Residues 28-45 form a helical membrane-spanning segment; the sequence is VFLVFYIITMVKIYIFLI.

It localises to the membrane. This is an uncharacterized protein from Saccharomyces cerevisiae (strain ATCC 204508 / S288c) (Baker's yeast).